Consider the following 701-residue polypeptide: Epithelial splicing regulatory protein 2 (701 aa).

RRM domains lie at Thr226–Gly303, Val327–Ala407, and Cys448–Phe523.

This sequence belongs to the ESRP family.

It is found in the nucleus. In terms of biological role, mRNA splicing factor that regulates the formation of epithelial cell-specific isoforms. Specifically regulates the expression of FGFR2-IIIb, an epithelial cell-specific isoform of FGFR2. Acts by directly binding specific sequences in mRNAs. Binds the GU-rich sequence motifs in the ISE/ISS-3, a cis-element regulatory region present in the mRNA of FGFR2. The sequence is that of Epithelial splicing regulatory protein 2 (ESRP2) from Gallus gallus (Chicken).